A 318-amino-acid polypeptide reads, in one-letter code: Deoxymugineic acid synthase 1 (318 aa).

Aspartate 48 contributes to the NADP(+) binding site. Tyrosine 53 serves as the catalytic Proton donor. Histidine 116 contacts substrate. Residues cysteine 162–asparagine 163, glutamine 184, phenylalanine 262–asparagine 270, and glutamate 277–arginine 285 each bind NADP(+).

This sequence belongs to the aldo/keto reductase family. Confined to cells participating in long distance transport (e.g. in the parts of pericycle cells adjacent to the protoxylem and metaxylem) in roots and to vascular bundles in shoots.

The catalysed reaction is 2'-deoxymugineate + NAD(+) = 3''-deamino-3''-oxonicotianamine + NADH + H(+). It catalyses the reaction 2'-deoxymugineate + NADP(+) = 3''-deamino-3''-oxonicotianamine + NADPH + H(+). It participates in siderophore biosynthesis. In terms of biological role, catalyzes the reduction of a 3''-keto intermediate during the biosynthesis of 2'-deoxymugineic acid (DMA) from L-Met. Involved in the formation of phytosiderophores (MAs) belonging to the mugineic acid family and required to acquire iron. The polypeptide is Deoxymugineic acid synthase 1 (Oryza sativa subsp. japonica (Rice)).